The sequence spans 561 residues: Arginine--tRNA ligase (561 aa).

Residues Ala128–His138 carry the 'HIGH' region motif.

It belongs to the class-I aminoacyl-tRNA synthetase family. As to quaternary structure, monomer.

The protein resides in the cytoplasm. It catalyses the reaction tRNA(Arg) + L-arginine + ATP = L-arginyl-tRNA(Arg) + AMP + diphosphate. This chain is Arginine--tRNA ligase, found in Chromohalobacter salexigens (strain ATCC BAA-138 / DSM 3043 / CIP 106854 / NCIMB 13768 / 1H11).